A 483-amino-acid polypeptide reads, in one-letter code: NADH-quinone oxidoreductase subunit N (483 aa).

14 helical membrane passes run 13 to 33, 39 to 57, 76 to 96, 110 to 130, 131 to 151, 165 to 185, 206 to 226, 240 to 260, 277 to 297, 302 to 322, 330 to 350, 373 to 393, 406 to 426, and 459 to 479; these read ALPEIFVLAMVSLILVIDAAV, YLAYGLSLVTLAGAAFLTV, PLSDVLKLFLYLTVAIVLVYS, FFVLALFALLGMMVMVSASHF, LTLYLGLELLSLSLYAMVALQ, FVLGALASGMLLYGMSMVYGV, IPLVFGIVFVVAGLAFKLGAV, PTAMTLFVGSAPKIAAFAFVV, MLVILAVLSMAIGNIAAIAQS, MFAYSTISHMGFMLLGVLAGS, MFYVLVYTLMTLGGFGMILLL, LAFVMLLLMFSMTGIPPTVGF, IGYVWLAVAAVLFSLVGAFYY, and LAVLALGILPQPLMAVCVQAI.

This sequence belongs to the complex I subunit 2 family. As to quaternary structure, NDH-1 is composed of 14 different subunits. Subunits NuoA, H, J, K, L, M, N constitute the membrane sector of the complex.

The protein localises to the cell inner membrane. It catalyses the reaction a quinone + NADH + 5 H(+)(in) = a quinol + NAD(+) + 4 H(+)(out). Functionally, NDH-1 shuttles electrons from NADH, via FMN and iron-sulfur (Fe-S) centers, to quinones in the respiratory chain. The immediate electron acceptor for the enzyme in this species is believed to be ubiquinone. Couples the redox reaction to proton translocation (for every two electrons transferred, four hydrogen ions are translocated across the cytoplasmic membrane), and thus conserves the redox energy in a proton gradient. This Thiobacillus denitrificans (strain ATCC 25259 / T1) protein is NADH-quinone oxidoreductase subunit N.